Consider the following 410-residue polypeptide: Neurotensin receptor type 2 (410 aa).

Over 1 to 32 (METSSPRPPRPSSNPGLSLDARLGVDTRLWAK) the chain is Extracellular. A helical membrane pass occupies residues 33–55 (VLFTALYALIWALGAAGNALSAH). The Cytoplasmic portion of the chain corresponds to 56-64 (VVLKARAGR). The chain crosses the membrane as a helical span at residues 65–87 (AGRLRHHVLSLALAGLLLLLVGV). Topologically, residues 88 to 109 (PVELYSFVWFHYPWVFGDLGCR) are extracellular. Cysteines 108 and 194 form a disulfide. Residues 110–131 (GYYFVHELCAYATVLSVAGLSA) form a helical membrane-spanning segment. Residues 132–154 (ERCLAVCQPLRARSLLTPRRTRW) lie on the Cytoplasmic side of the membrane. The helical transmembrane segment at 155–176 (LVALSWAASLGLALPMAVIMGQ) threads the bilayer. Over 177 to 217 (KHELETADGEPEPASRVCTVLVSRTALQVFIQVNVLVSFVL) the chain is Extracellular. Residues 218–237 (PLALTAFLNGVTVSHLLALC) traverse the membrane as a helical segment. Residues 238-297 (SQVPSTSTPGSSTPSRLELLSEEGLLSFIVWKKTFIQGGQVSLVRHKDVRRIRSLQRSVQ) are Cytoplasmic-facing. Residues 298–318 (VLRAIVVMYVICWLPYHARRL) form a helical membrane-spanning segment. Residues 319–337 (MYCYVPDDAWTDPLYNFYH) are Extracellular-facing. A helical membrane pass occupies residues 338-358 (YFYMVTNTLFYVSSAVTPLLY). Residues 359 to 410 (NAVSSSFRKLFLEAVSSLCGEHHPMKRLPPKPQSPTLMDTASGFGDPPETRT) lie on the Cytoplasmic side of the membrane. A lipid anchor (S-palmitoyl cysteine) is attached at Cys377. The disordered stretch occupies residues 381-410 (HPMKRLPPKPQSPTLMDTASGFGDPPETRT).

It belongs to the G-protein coupled receptor 1 family. Neurotensin receptor subfamily. NTSR2 sub-subfamily. In terms of tissue distribution, expressed in prostate (at protein level).

The protein localises to the cell membrane. Receptor for the tridecapeptide neurotensin. It is associated with G proteins that activate a phosphatidylinositol-calcium second messenger system. This is Neurotensin receptor type 2 (NTSR2) from Homo sapiens (Human).